A 133-amino-acid polypeptide reads, in one-letter code: Glycine cleavage system H protein (133 aa).

The region spanning 24 to 106 (IATIGISAYA…YGDGWLLKVR (83 aa)) is the Lipoyl-binding domain. Lys-65 is modified (N6-lipoyllysine).

The protein belongs to the GcvH family. The glycine cleavage system is composed of four proteins: P, T, L and H. Requires (R)-lipoate as cofactor.

Functionally, the glycine cleavage system catalyzes the degradation of glycine. The H protein shuttles the methylamine group of glycine from the P protein to the T protein. The polypeptide is Glycine cleavage system H protein (Crocosphaera subtropica (strain ATCC 51142 / BH68) (Cyanothece sp. (strain ATCC 51142))).